The following is a 484-amino-acid chain: Cobyric acid synthase (484 aa).

The region spanning 251–438 (ALKIAVPVLS…LHGLFGNDEY (188 aa)) is the GATase cobBQ-type domain. The active-site Nucleophile is cysteine 333. Residue histidine 430 is part of the active site.

It belongs to the CobB/CobQ family. CobQ subfamily.

It participates in cofactor biosynthesis; adenosylcobalamin biosynthesis. Its function is as follows. Catalyzes amidations at positions B, D, E, and G on adenosylcobyrinic A,C-diamide. NH(2) groups are provided by glutamine, and one molecule of ATP is hydrogenolyzed for each amidation. This is Cobyric acid synthase from Allorhizobium ampelinum (strain ATCC BAA-846 / DSM 112012 / S4) (Agrobacterium vitis (strain S4)).